Reading from the N-terminus, the 426-residue chain is MNIISVGVNHKTAPIEIRERISLSEVQAKEFLSDIISSGIAQEAMVLSTCNRTELYVVPGMSEVTGHYLKEYLISYKNAEKEVRPEHFFNRFYCNTARHLFEVSSATDSLVLGEGQILGQVKNAYRIAVEEQSAGILLTRLCHTAFSVAKKVKTRTRIMEGAVSVSYAAVELAQKIFSNLSMKKILLVGAGETGELAAKHMFQKNARNIVITNRTMSKAEALAEELGTNQVLPFETFRDNLHEFDIIITAVSTKDYVLKAPDMHQSMQKRRLKPVIILDLGLPRNVDPEIRSLQNMFLKDIDDLKHIIDKNLEMRRSELPKVQEIIDEELVGFGQWINTLKVRPTIVDLQSKFLEIKEKELERYRHKVSDEELRRMERLSDRILKKILHHPIKMLKSPVDTADNIPSKVNLVRNIFDLEEQNQLKQ.

Residues 49 to 52 (TCNR), Ser-109, 114 to 116 (EGQ), and Gln-120 contribute to the substrate site. Cys-50 acts as the Nucleophile in catalysis. Position 189-194 (189-194 (GAGETG)) interacts with NADP(+).

It belongs to the glutamyl-tRNA reductase family. Homodimer.

It catalyses the reaction (S)-4-amino-5-oxopentanoate + tRNA(Glu) + NADP(+) = L-glutamyl-tRNA(Glu) + NADPH + H(+). The protein operates within porphyrin-containing compound metabolism; protoporphyrin-IX biosynthesis; 5-aminolevulinate from L-glutamyl-tRNA(Glu): step 1/2. It participates in porphyrin-containing compound metabolism; chlorophyll biosynthesis. Catalyzes the NADPH-dependent reduction of glutamyl-tRNA(Glu) to glutamate 1-semialdehyde (GSA). The polypeptide is Glutamyl-tRNA reductase (Prosthecochloris aestuarii (strain DSM 271 / SK 413)).